A 191-amino-acid chain; its full sequence is Inosine triphosphate pyrophosphatase (191 aa).

9-14 serves as a coordination point for ITP; sequence TGNAKK. Glu39 lines the Mg(2+) pocket. Residues Lys51, 67-68, Lys84, 143-146, Lys166, and 171-172 contribute to the ITP site; these read DT, FGWD, and HR.

The protein belongs to the HAM1 NTPase family. As to quaternary structure, homodimer. It depends on Mg(2+) as a cofactor. Requires Mn(2+) as cofactor.

It is found in the cytoplasm. It catalyses the reaction ITP + H2O = IMP + diphosphate + H(+). The catalysed reaction is dITP + H2O = dIMP + diphosphate + H(+). The enzyme catalyses XTP + H2O = XMP + diphosphate + H(+). Pyrophosphatase that hydrolyzes non-canonical purine nucleotides such as inosine triphosphate (ITP), deoxyinosine triphosphate (dITP) or xanthosine 5'-triphosphate (XTP) to their respective monophosphate derivatives. The enzyme does not distinguish between the deoxy- and ribose forms. Probably excludes non-canonical purines from RNA and DNA precursor pools, thus preventing their incorporation into RNA and DNA and avoiding chromosomal lesions. In Drosophila melanogaster (Fruit fly), this protein is Inosine triphosphate pyrophosphatase.